The primary structure comprises 187 residues: Cell division protein SepF (187 aa).

Positions 13–74 (GLAEDDRYAE…PAPATTAQVT (62 aa)) are disordered. A compositionally biased stretch (basic and acidic residues) spans 16–65 (EDDRYAEDTEPETTRPRVEAAREVRVESRHEARPEVRHEPRPEVSVERRP).

It belongs to the SepF family. Homodimer. Interacts with FtsZ.

Its subcellular location is the cytoplasm. In terms of biological role, cell division protein that is part of the divisome complex and is recruited early to the Z-ring. Probably stimulates Z-ring formation, perhaps through the cross-linking of FtsZ protofilaments. Its function overlaps with FtsA. This Kineococcus radiotolerans (strain ATCC BAA-149 / DSM 14245 / SRS30216) protein is Cell division protein SepF.